The chain runs to 547 residues: Tripartite motif-containing protein 5 (547 aa).

An N-acetylalanine modification is found at A2. The segment at 15–59 (CPICLELLTEPLSLDCGHSFCQACITANHKESTLHQGERSCPLCR) adopts an RING-type zinc-finger fold. A Phosphoserine modification is found at S86. The B box-type zinc finger occupies 91–132 (QKVDRCARHGEKLLLFCQQHGNVICWLCERSQEHRGHSTFLV). Zn(2+)-binding residues include C96, H99, C118, and H124. Positions 132-225 (VEEVAQKYQE…AQSENDMVLQ (94 aa)) form a coiled coil. The tract at residues 186-199 (FKQLRDILDCEESN) is required for interaction with GABARAP and for autophagy. The region spanning 280–547 (PDLKGMLQVF…LPMTLCSPSS (268 aa)) is the B30.2/SPRY domain.

Belongs to the TRIM/RBCC family. In terms of assembly, can form homodimers and homotrimers. In addition to lower-order dimerization, also exhibits a higher-order multimerization and both low- and high-order multimerizations are essential for its restriction activity. Interacts with BTBD1 and BTBD2. Interacts with PSMC4, PSMC5, PSMD7 and HSPA8/HSC70. Interacts (via B30.2/SPRY domain) with HSPA1A/B. Interacts with PSMC2, MAP3K7/TAK1, TAB2 and TAB3. Interacts with SQSTM1. Interacts with TRIM6 and TRIM34. Interacts with ULK1 (phosphorylated form), GABARAP, GABARAPL1, GABARAPL2, MAP1LC3A, MAP1LC3C and BECN1. Degraded in a proteasome-independent fashion in the absence of viral infection but in a proteasome-dependent fashion following exposure to restriction sensitive virus. In terms of processing, autoubiquitinated in a RING finger- and UBE2D2-dependent manner. Monoubiquitinated by TRIM21. Deubiquitinated by Yersinia YopJ. Ubiquitination may not lead to proteasomal degradation.

It localises to the cytoplasm. The protein resides in the nucleus. It catalyses the reaction S-ubiquitinyl-[E2 ubiquitin-conjugating enzyme]-L-cysteine + [acceptor protein]-L-lysine = [E2 ubiquitin-conjugating enzyme]-L-cysteine + N(6)-ubiquitinyl-[acceptor protein]-L-lysine.. It participates in protein modification; protein ubiquitination. Functionally, capsid-specific restriction factor that prevents infection from non-host-adapted retroviruses. Blocks viral replication early in the life cycle, after viral entry but before reverse transcription. In addition to acting as a capsid-specific restriction factor, also acts as a pattern recognition receptor that activates innate immune signaling in response to the retroviral capsid lattice. Binding to the viral capsid triggers its E3 ubiquitin ligase activity, and in concert with the heterodimeric ubiquitin conjugating enzyme complex UBE2V1-UBE2N (also known as UBC13-UEV1A complex) generates 'Lys-63'-linked polyubiquitin chains, which in turn are catalysts in the autophosphorylation of the MAP3K7/TAK1 complex (includes TAK1, TAB2, and TAB3). Activation of the MAP3K7/TAK1 complex by autophosphorylation results in the induction and expression of NF-kappa-B and MAPK-responsive inflammatory genes, thereby leading to an innate immune response in the infected cell. Plays a role in regulating autophagy through activation of autophagy regulator BECN1 by causing its dissociation from its inhibitors BCL2 and TAB2. The protein is Tripartite motif-containing protein 5 (TRIM5) of Ateles geoffroyi (Black-handed spider monkey).